The following is a 391-amino-acid chain: Ferrochelatase (391 aa).

Fe cation contacts are provided by His-196 and Glu-281.

It belongs to the ferrochelatase family.

It is found in the cytoplasm. It carries out the reaction heme b + 2 H(+) = protoporphyrin IX + Fe(2+). It participates in porphyrin-containing compound metabolism; protoheme biosynthesis; protoheme from protoporphyrin-IX: step 1/1. Catalyzes the ferrous insertion into protoporphyrin IX. The chain is Ferrochelatase from Prochlorococcus marinus (strain MIT 9312).